Consider the following 502-residue polypeptide: Hexokinase-4 (502 aa).

A helical membrane pass occupies residues 4 to 24 (VLVMLTAAAAVVACSVATVMV). The 457-residue stretch at 35–491 (RRVVGLLKDL…SSIGSALLLA (457 aa)) folds into the Hexokinase domain. The interval 90–228 (NGSETGTYYA…GLDIRVAALV (139 aa)) is hexokinase small subdomain. Residues G104 and S105 each contribute to the ADP site. D-glucose is bound by residues T194, K195, N229, and D230. The segment at 229-480 (NDTVGALSFG…QHVVVKAMED (252 aa)) is hexokinase large subdomain. Residue T253 coordinates ADP. The D-glucose site is built by N256, E284, and E315. G445 provides a ligand contact to ADP.

This sequence belongs to the hexokinase family.

It localises to the mitochondrion outer membrane. It catalyses the reaction a D-hexose + ATP = a D-hexose 6-phosphate + ADP + H(+). It carries out the reaction D-fructose + ATP = D-fructose 6-phosphate + ADP + H(+). The enzyme catalyses D-glucose + ATP = D-glucose 6-phosphate + ADP + H(+). The protein operates within carbohydrate metabolism; hexose metabolism. It functions in the pathway carbohydrate degradation; glycolysis; D-glyceraldehyde 3-phosphate and glycerone phosphate from D-glucose: step 1/4. Fructose and glucose phosphorylating enzyme. May be involved in the phosphorylation of glucose during the export from mitochondrion to cytosol. The chain is Hexokinase-4 from Arabidopsis thaliana (Mouse-ear cress).